Here is a 691-residue protein sequence, read N- to C-terminus: DNA ligase (691 aa).

Residues 53–57 (DSEYD), 102–103 (SL), and glutamate 135 each bind NAD(+). Lysine 137 functions as the N6-AMP-lysine intermediate in the catalytic mechanism. Arginine 158, glutamate 195, lysine 310, and lysine 334 together coordinate NAD(+). Residues cysteine 428, cysteine 431, cysteine 446, and cysteine 452 each coordinate Zn(2+). Residues 613-691 (SEGLPLDGQT…EEEFLALVGE (79 aa)) form the BRCT domain.

It belongs to the NAD-dependent DNA ligase family. LigA subfamily. It depends on Mg(2+) as a cofactor. Mn(2+) serves as cofactor.

It carries out the reaction NAD(+) + (deoxyribonucleotide)n-3'-hydroxyl + 5'-phospho-(deoxyribonucleotide)m = (deoxyribonucleotide)n+m + AMP + beta-nicotinamide D-nucleotide.. In terms of biological role, DNA ligase that catalyzes the formation of phosphodiester linkages between 5'-phosphoryl and 3'-hydroxyl groups in double-stranded DNA using NAD as a coenzyme and as the energy source for the reaction. It is essential for DNA replication and repair of damaged DNA. The sequence is that of DNA ligase from Psychrobacter arcticus (strain DSM 17307 / VKM B-2377 / 273-4).